A 422-amino-acid chain; its full sequence is Tyrosine--tRNA ligase 1 (422 aa).

Tyr-36 contributes to the L-tyrosine binding site. The short motif at 41–50 is the 'HIGH' region element; it reads PTAGSLHIGH. Positions 173 and 177 each coordinate L-tyrosine. The 'KMSKS' region signature appears at 233 to 237; the sequence is KFGKT. Residue Lys-236 participates in ATP binding. Positions 355–419 constitute an S4 RNA-binding domain; the sequence is SDVVTLLLET…GKKQFAMVKL (65 aa).

This sequence belongs to the class-I aminoacyl-tRNA synthetase family. TyrS type 1 subfamily. Homodimer.

The protein resides in the cytoplasm. It carries out the reaction tRNA(Tyr) + L-tyrosine + ATP = L-tyrosyl-tRNA(Tyr) + AMP + diphosphate + H(+). In terms of biological role, catalyzes the attachment of tyrosine to tRNA(Tyr) in a two-step reaction: tyrosine is first activated by ATP to form Tyr-AMP and then transferred to the acceptor end of tRNA(Tyr). The chain is Tyrosine--tRNA ligase 1 from Vibrio vulnificus (strain YJ016).